Consider the following 1079-residue polypeptide: Translation initiation factor IF-2 (1079 aa).

Basic and acidic residues-rich tracts occupy residues 52-65 (VQAQRDGGARKEGN), 75-90 (RDGDRASARAEAKAPE), and 102-134 (APERAEEADKPAVAKPAKAPETEAHARARKEPQ). The tract at residues 52-488 (VQAQRDGGAR…RGKKDVRPAA (437 aa)) is disordered. The segment covering 150-184 (APVAKVVEAAPAETPAPEAPAVKATVTAEAAPAKT) has biased composition (low complexity). Positions 185–194 (VEPESERPQA) are enriched in basic and acidic residues. Positions 276 to 291 (AAVAQQQMQQQAAQQQ) are enriched in low complexity. A compositionally biased stretch (basic and acidic residues) spans 306 to 327 (GGYRPEGQREGGYRPEGQREGG). Low complexity-rich tracts occupy residues 348 to 370 (EGGYRPGAPRPEGGYRPAGGPRP) and 380 to 398 (PGAPRPEGGYRPAGGAPRP). Residues 419–429 (PRPGGFGGAPG) show a composition bias toward gly residues. Over residues 461–471 (PRGRSDDDVMR) the composition is skewed to basic and acidic residues. Basic residues predominate over residues 473–482 (PRGRGKRGKK). The tr-type G domain maps to 578–745 (TRPPVVTIMG…LIAIQAEILE (168 aa)). The tract at residues 587-594 (GHVDHGKT) is G1. 587–594 (GHVDHGKT) is a GTP binding site. Residues 612-616 (GITQH) form a G2 region. Residues 633 to 636 (DTPG) are G3. GTP contacts are provided by residues 633 to 637 (DTPGH) and 687 to 690 (NKMD). A G4 region spans residues 687-690 (NKMD). The G5 stretch occupies residues 723-725 (SAK).

Belongs to the TRAFAC class translation factor GTPase superfamily. Classic translation factor GTPase family. IF-2 subfamily.

Its subcellular location is the cytoplasm. One of the essential components for the initiation of protein synthesis. Protects formylmethionyl-tRNA from spontaneous hydrolysis and promotes its binding to the 30S ribosomal subunits. Also involved in the hydrolysis of GTP during the formation of the 70S ribosomal complex. This Nitratidesulfovibrio vulgaris (strain DP4) (Desulfovibrio vulgaris) protein is Translation initiation factor IF-2.